The chain runs to 252 residues: MSVEELKDTVHKLHERIQQLEKKVGVLPSSQPDFAKQLRLVLIGAPGSGKGTQSTDLKDKFCACHLATGDMLRSQVKQGTPLGLEAKKIMDQGGLVNDEIMIGMIKQELETNQDCKKGFILDGFPRTIPQAEKLDSMLKDRKTPLENAIELKIDDELLVDRITGRLVHPASGRSYHKIFSPPKKEMTDDITGEPLVQRSDDNEAALKKRLVTYHAQTEPIVEYYKKTGIWQGIDASQKPAKVWKDILKCLGQ.

47-52 (GSGKGT) contributes to the ATP binding site. Residues 67–96 (ATGDMLRSQVKQGTPLGLEAKKIMDQGGLV) are NMP. Residues Thr-68, Arg-73, 94–96 (GLV), 123–126 (GFPR), and Gln-130 contribute to the AMP site. An LID region spans residues 164–201 (GRLVHPASGRSYHKIFSPPKKEMTDDITGEPLVQRSDD). Residues Arg-165 and 174 to 175 (SY) contribute to the ATP site. AMP-binding residues include Arg-198 and Arg-209. Gln-237 contributes to the ATP binding site.

It belongs to the adenylate kinase family. AK2 subfamily. In terms of assembly, monomer.

It localises to the cytoplasm. It is found in the cytosol. Its subcellular location is the mitochondrion intermembrane space. The enzyme catalyses AMP + ATP = 2 ADP. In terms of biological role, catalyzes the reversible transfer of the terminal phosphate group between ATP and AMP. Plays an important role in cellular energy homeostasis and in adenine nucleotide metabolism. Adenylate kinase activity is critical for regulation of the phosphate utilization and the AMP de novo biosynthesis pathways. The polypeptide is Adenylate kinase (Lodderomyces elongisporus (strain ATCC 11503 / CBS 2605 / JCM 1781 / NBRC 1676 / NRRL YB-4239) (Yeast)).